We begin with the raw amino-acid sequence, 204 residues long: Methylthioribulose-1-phosphate dehydratase (204 aa).

Zn(2+)-binding residues include H94 and H96.

The protein belongs to the aldolase class II family. MtnB subfamily. Zn(2+) serves as cofactor.

The enzyme catalyses 5-(methylsulfanyl)-D-ribulose 1-phosphate = 5-methylsulfanyl-2,3-dioxopentyl phosphate + H2O. Its pathway is amino-acid biosynthesis; L-methionine biosynthesis via salvage pathway; L-methionine from S-methyl-5-thio-alpha-D-ribose 1-phosphate: step 2/6. Catalyzes the dehydration of methylthioribulose-1-phosphate (MTRu-1-P) into 2,3-diketo-5-methylthiopentyl-1-phosphate (DK-MTP-1-P). In Pseudomonas syringae pv. tomato (strain ATCC BAA-871 / DC3000), this protein is Methylthioribulose-1-phosphate dehydratase.